Reading from the N-terminus, the 521-residue chain is Probable protein kinase UbiB (521 aa).

Positions 119-497 constitute a Protein kinase domain; that stretch reads QFDETPIASA…QKRTNRLLQT (379 aa). ATP is bound by residues 125–133 and K151; that span reads IASASIAQV. Catalysis depends on D286, which acts as the Proton acceptor. The chain crosses the membrane as a helical span at residues 496 to 516; sequence QTIIYGGIGFVLGLLAMQLLV.

The protein belongs to the ABC1 family. UbiB subfamily.

The protein localises to the cell inner membrane. Its pathway is cofactor biosynthesis; ubiquinone biosynthesis [regulation]. In terms of biological role, is probably a protein kinase regulator of UbiI activity which is involved in aerobic coenzyme Q (ubiquinone) biosynthesis. This chain is Probable protein kinase UbiB, found in Variovorax paradoxus (strain S110).